Here is a 382-residue protein sequence, read N- to C-terminus: Protein delta homolog 2 (382 aa).

An N-terminal signal peptide occupies residues Met1–Ala26. EGF-like domains follow at residues Asp27–Glu58, Arg62–Asp89, Asp91–Glu129, and Lys131–Glu172. The Extracellular segment spans residues Asp27 to Ser305. 17 disulfides stabilise this stretch: Cys29/Cys40, Cys33/Cys46, Cys48/Cys57, Cys66/Cys71, Cys79/Cys88, Cys95/Cys107, Cys101/Cys117, Cys119/Cys128, Cys135/Cys148, Cys142/Cys160, Cys162/Cys171, Cys178/Cys189, Cys183/Cys198, Cys200/Cys209, Cys216/Cys227, Cys221/Cys236, and Cys238/Cys247. Asn157 carries N-linked (GlcNAc...) asparagine glycosylation. Residues Asn174–Thr210 enclose the EGF-like 5; calcium-binding domain. Positions Asn212–Glu248 constitute an EGF-like 6; calcium-binding domain. The helical transmembrane segment at Leu306–Leu326 threads the bilayer. Over Thr327 to Leu382 the chain is Cytoplasmic.

As to expression, detected in a number of tissues including lung, brain, adrenal gland, testis, adult liver, placenta, ovary and thymus. Not detected in fetal liver or in adult spleen, muscle and heart.

The protein localises to the membrane. In terms of biological role, regulates adipogenesis. The polypeptide is Protein delta homolog 2 (Dlk2) (Mus musculus (Mouse)).